The primary structure comprises 234 residues: Phosphoribosylaminoimidazole-succinocarboxamide synthase (234 aa).

This sequence belongs to the SAICAR synthetase family.

It catalyses the reaction 5-amino-1-(5-phospho-D-ribosyl)imidazole-4-carboxylate + L-aspartate + ATP = (2S)-2-[5-amino-1-(5-phospho-beta-D-ribosyl)imidazole-4-carboxamido]succinate + ADP + phosphate + 2 H(+). Its pathway is purine metabolism; IMP biosynthesis via de novo pathway; 5-amino-1-(5-phospho-D-ribosyl)imidazole-4-carboxamide from 5-amino-1-(5-phospho-D-ribosyl)imidazole-4-carboxylate: step 1/2. This Staphylococcus aureus (strain COL) protein is Phosphoribosylaminoimidazole-succinocarboxamide synthase.